Reading from the N-terminus, the 452-residue chain is Maltoporin (452 aa).

The first 25 residues, 1–25, serve as a signal peptide directing secretion; sequence MMITLRKLPLAVAVAAGVMSAQAMA.

This sequence belongs to the porin LamB (TC 1.B.3) family. Homotrimer formed of three 18-stranded antiparallel beta-barrels, containing three independent channels.

The protein localises to the cell outer membrane. The catalysed reaction is beta-maltose(in) = beta-maltose(out). Functionally, involved in the transport of maltose and maltodextrins. The chain is Maltoporin from Salmonella heidelberg (strain SL476).